Reading from the N-terminus, the 176-residue chain is Ferritin, middle subunit (176 aa).

In terms of domain architecture, Ferritin-like diiron spans 7 to 156 (QNYHSDCEAA…DFITNLKRLG (150 aa)). Fe cation contacts are provided by Glu24, Glu59, His62, Glu104, Gln138, and Asp141.

It belongs to the ferritin family. In terms of assembly, oligomer of 24 subunits. The functional molecule is roughly spherical and contains a central cavity into which the polymeric mineral iron core is deposited.

It carries out the reaction 4 Fe(2+) + O2 + 4 H(+) = 4 Fe(3+) + 2 H2O. In terms of biological role, stores iron in a soluble, non-toxic, readily available form. Important for iron homeostasis. Has ferroxidase activity. Iron is taken up in the ferrous form and deposited as ferric hydroxides after oxidation. This chain is Ferritin, middle subunit, found in Aquarana catesbeiana (American bullfrog).